The following is a 1013-amino-acid chain: Mediator of RNA polymerase II transcription subunit 5 (1013 aa).

The protein belongs to the Mediator complex subunit 5 family. As to quaternary structure, component of the Mediator complex.

The protein localises to the nucleus. Its function is as follows. Component of the Mediator complex, a coactivator involved in the regulated transcription of nearly all RNA polymerase II-dependent genes. Mediator functions as a bridge to convey information from gene-specific regulatory proteins to the basal RNA polymerase II transcription machinery. Mediator is recruited to promoters by direct interactions with regulatory proteins and serves as a scaffold for the assembly of a functional preinitiation complex with RNA polymerase II and the general transcription factors. In Aspergillus oryzae (strain ATCC 42149 / RIB 40) (Yellow koji mold), this protein is Mediator of RNA polymerase II transcription subunit 5 (NUT1).